A 120-amino-acid polypeptide reads, in one-letter code: Ribonuclease P protein component (120 aa).

Belongs to the RnpA family. As to quaternary structure, consists of a catalytic RNA component (M1 or rnpB) and a protein subunit.

It carries out the reaction Endonucleolytic cleavage of RNA, removing 5'-extranucleotides from tRNA precursor.. Its function is as follows. RNaseP catalyzes the removal of the 5'-leader sequence from pre-tRNA to produce the mature 5'-terminus. It can also cleave other RNA substrates such as 4.5S RNA. The protein component plays an auxiliary but essential role in vivo by binding to the 5'-leader sequence and broadening the substrate specificity of the ribozyme. The polypeptide is Ribonuclease P protein component (Latilactobacillus sakei subsp. sakei (strain 23K) (Lactobacillus sakei subsp. sakei)).